The primary structure comprises 80 residues: Conotoxin VnMSGL-0121 (80 aa).

The signal sequence occupies residues 1 to 20 (MSGLGIMVLTLLLLVSMATS). A propeptide spanning residues 21-44 (HQDGGGKQATQRDAINVRRRRSIT) is cleaved from the precursor. 3 disulfides stabilise this stretch: C52–C65, C56–C74, and C64–C78. Phenylalanine amide is present on F79.

It belongs to the conotoxin O3 superfamily. In terms of tissue distribution, expressed by the venom duct.

The protein localises to the secreted. The polypeptide is Conotoxin VnMSGL-0121 (Conus ventricosus (Mediterranean cone)).